A 384-amino-acid polypeptide reads, in one-letter code: Dual-specificity RNA methyltransferase RlmN (384 aa).

Catalysis depends on E93, which acts as the Proton acceptor. The 241-residue stretch at 99 to 339 folds into the Radical SAM core domain; the sequence is EDTRGTLCVS…TTIRKTRGDD (241 aa). A disulfide bridge links C106 with C344. Residues C113, C117, and C120 each contribute to the [4Fe-4S] cluster site. Residues 170–171, S202, 224–226, and N301 each bind S-adenosyl-L-methionine; these read GE and SLH. The active-site S-methylcysteine intermediate is the C344.

The protein belongs to the radical SAM superfamily. RlmN family. Requires [4Fe-4S] cluster as cofactor.

It is found in the cytoplasm. The catalysed reaction is adenosine(2503) in 23S rRNA + 2 reduced [2Fe-2S]-[ferredoxin] + 2 S-adenosyl-L-methionine = 2-methyladenosine(2503) in 23S rRNA + 5'-deoxyadenosine + L-methionine + 2 oxidized [2Fe-2S]-[ferredoxin] + S-adenosyl-L-homocysteine. The enzyme catalyses adenosine(37) in tRNA + 2 reduced [2Fe-2S]-[ferredoxin] + 2 S-adenosyl-L-methionine = 2-methyladenosine(37) in tRNA + 5'-deoxyadenosine + L-methionine + 2 oxidized [2Fe-2S]-[ferredoxin] + S-adenosyl-L-homocysteine. Functionally, specifically methylates position 2 of adenine 2503 in 23S rRNA and position 2 of adenine 37 in tRNAs. m2A2503 modification seems to play a crucial role in the proofreading step occurring at the peptidyl transferase center and thus would serve to optimize ribosomal fidelity. This chain is Dual-specificity RNA methyltransferase RlmN, found in Cupriavidus metallidurans (strain ATCC 43123 / DSM 2839 / NBRC 102507 / CH34) (Ralstonia metallidurans).